The chain runs to 371 residues: Probable inactive methyltransferase Os04g0175900 (371 aa).

137-143 (LDVDEDN) contributes to the substrate binding site. Residues 170-188 (LFEYMGTNHRFNMLFNQAM) form a substrate binding region. 4 residues coordinate S-adenosyl-L-methionine: Gly216, Asp239, Met260, and Lys273.

Belongs to the class I-like SAM-binding methyltransferase superfamily. Cation-independent O-methyltransferase family. COMT subfamily.

This chain is Probable inactive methyltransferase Os04g0175900, found in Oryza sativa subsp. japonica (Rice).